We begin with the raw amino-acid sequence, 226 residues long: ATP-dependent dethiobiotin synthetase BioD (226 aa).

Residue 13–18 (DVGKTV) coordinates ATP. Threonine 17 serves as a coordination point for Mg(2+). The active site involves lysine 38. ATP contacts are provided by residues aspartate 55, 116 to 119 (EGAG), and 176 to 177 (NR). Positions 55 and 116 each coordinate Mg(2+).

The protein belongs to the dethiobiotin synthetase family. As to quaternary structure, homodimer. Mg(2+) serves as cofactor.

It localises to the cytoplasm. The enzyme catalyses (7R,8S)-7,8-diammoniononanoate + CO2 + ATP = (4R,5S)-dethiobiotin + ADP + phosphate + 3 H(+). Its pathway is cofactor biosynthesis; biotin biosynthesis; biotin from 7,8-diaminononanoate: step 1/2. Catalyzes a mechanistically unusual reaction, the ATP-dependent insertion of CO2 between the N7 and N8 nitrogen atoms of 7,8-diaminopelargonic acid (DAPA, also called 7,8-diammoniononanoate) to form a ureido ring. This Aliivibrio fischeri (strain MJ11) (Vibrio fischeri) protein is ATP-dependent dethiobiotin synthetase BioD.